A 489-amino-acid chain; its full sequence is UDP-N-acetylmuramoyl-L-alanyl-D-glutamate--2,6-diaminopimelate ligase (489 aa).

Ser30 contacts UDP-N-acetyl-alpha-D-muramoyl-L-alanyl-D-glutamate. ATP is bound at residue Gly113–Ser119. Residues Thr155 to Thr156, Ser182, Gln188, and Arg190 contribute to the UDP-N-acetyl-alpha-D-muramoyl-L-alanyl-D-glutamate site. An N6-carboxylysine modification is found at Lys222. Meso-2,6-diaminopimelate-binding positions include Arg388, Asp412–Arg415, Gly463, and Glu467. The short motif at Asp412–Arg415 is the Meso-diaminopimelate recognition motif element.

The protein belongs to the MurCDEF family. MurE subfamily. The cofactor is Mg(2+). In terms of processing, carboxylation is probably crucial for Mg(2+) binding and, consequently, for the gamma-phosphate positioning of ATP.

The protein resides in the cytoplasm. The enzyme catalyses UDP-N-acetyl-alpha-D-muramoyl-L-alanyl-D-glutamate + meso-2,6-diaminopimelate + ATP = UDP-N-acetyl-alpha-D-muramoyl-L-alanyl-gamma-D-glutamyl-meso-2,6-diaminopimelate + ADP + phosphate + H(+). The protein operates within cell wall biogenesis; peptidoglycan biosynthesis. In terms of biological role, catalyzes the addition of meso-diaminopimelic acid to the nucleotide precursor UDP-N-acetylmuramoyl-L-alanyl-D-glutamate (UMAG) in the biosynthesis of bacterial cell-wall peptidoglycan. The polypeptide is UDP-N-acetylmuramoyl-L-alanyl-D-glutamate--2,6-diaminopimelate ligase (Coxiella burnetii (strain RSA 493 / Nine Mile phase I)).